Here is a 215-residue protein sequence, read N- to C-terminus: Glycerol-3-phosphate acyltransferase (215 aa).

Helical transmembrane passes span 3-23 (LILLILTAYLLGSIPTGLWIG), 42-61 (TNTFRILGLKAGAATLLIDI), 68-90 (TLLPVLVGASNISPITIGFFAVL), 110-130 (AGVLLGFAPLYLLFLAAVFVL), 134-154 (LFSMISLASLTASVVAVISVL), and 162-182 (LLPSYDWLLTITIVVLAAIII).

The protein belongs to the PlsY family. In terms of assembly, probably interacts with PlsX.

It is found in the cell membrane. It carries out the reaction an acyl phosphate + sn-glycerol 3-phosphate = a 1-acyl-sn-glycero-3-phosphate + phosphate. Its pathway is lipid metabolism; phospholipid metabolism. Catalyzes the transfer of an acyl group from acyl-phosphate (acyl-PO(4)) to glycerol-3-phosphate (G3P) to form lysophosphatidic acid (LPA). This enzyme utilizes acyl-phosphate as fatty acyl donor, but not acyl-CoA or acyl-ACP. The protein is Glycerol-3-phosphate acyltransferase of Streptococcus equi subsp. equi (strain 4047).